Consider the following 345-residue polypeptide: S-adenosylmethionine:tRNA ribosyltransferase-isomerase (345 aa).

This sequence belongs to the QueA family. Monomer.

It is found in the cytoplasm. It carries out the reaction 7-aminomethyl-7-carbaguanosine(34) in tRNA + S-adenosyl-L-methionine = epoxyqueuosine(34) in tRNA + adenine + L-methionine + 2 H(+). It functions in the pathway tRNA modification; tRNA-queuosine biosynthesis. In terms of biological role, transfers and isomerizes the ribose moiety from AdoMet to the 7-aminomethyl group of 7-deazaguanine (preQ1-tRNA) to give epoxyqueuosine (oQ-tRNA). This Helicobacter pylori (strain G27) protein is S-adenosylmethionine:tRNA ribosyltransferase-isomerase.